A 342-amino-acid polypeptide reads, in one-letter code: Dihydroorotase (342 aa).

The Zn(2+) site is built by His13 and His15. Substrate is bound by residues 15 to 17 (HLR) and Asn41. Zn(2+) contacts are provided by Lys98, His135, and His173. Residue Lys98 is modified to N6-carboxylysine. Substrate is bound at residue His135. Position 218 (Leu218) interacts with substrate. A Zn(2+)-binding site is contributed by Asp246. Residue Asp246 is part of the active site. Residues His250 and Ala262 each coordinate substrate.

The protein belongs to the metallo-dependent hydrolases superfamily. DHOase family. Class II DHOase subfamily. As to quaternary structure, homodimer. It depends on Zn(2+) as a cofactor.

It carries out the reaction (S)-dihydroorotate + H2O = N-carbamoyl-L-aspartate + H(+). The protein operates within pyrimidine metabolism; UMP biosynthesis via de novo pathway; (S)-dihydroorotate from bicarbonate: step 3/3. In terms of biological role, catalyzes the reversible cyclization of carbamoyl aspartate to dihydroorotate. The polypeptide is Dihydroorotase (Photobacterium profundum (strain SS9)).